Consider the following 207-residue polypeptide: Small ribosomal subunit protein uS4 (207 aa).

Positions 31 to 55 (KCKLDSKPGQHGRTSGARTSDYGTQ) are disordered. The span at 42–53 (GRTSGARTSDYG) shows a compositional bias: polar residues. An S4 RNA-binding domain is found at 97 to 160 (SRLDNVVYRM…KKQARIVEAL (64 aa)).

The protein belongs to the universal ribosomal protein uS4 family. As to quaternary structure, part of the 30S ribosomal subunit. Contacts protein S5. The interaction surface between S4 and S5 is involved in control of translational fidelity.

In terms of biological role, one of the primary rRNA binding proteins, it binds directly to 16S rRNA where it nucleates assembly of the body of the 30S subunit. With S5 and S12 plays an important role in translational accuracy. The chain is Small ribosomal subunit protein uS4 from Burkholderia orbicola (strain MC0-3).